We begin with the raw amino-acid sequence, 237 residues long: DNA repair protein RecO (237 aa).

The protein belongs to the RecO family.

Functionally, involved in DNA repair and RecF pathway recombination. The chain is DNA repair protein RecO from Rickettsia africae (strain ESF-5).